We begin with the raw amino-acid sequence, 256 residues long: Thiazole synthase (256 aa).

K96 functions as the Schiff-base intermediate with DXP in the catalytic mechanism. 1-deoxy-D-xylulose 5-phosphate is bound by residues G157, 184–185, and 206–207; these read AG and NT.

It belongs to the ThiG family. As to quaternary structure, homotetramer. Forms heterodimers with either ThiH or ThiS.

It is found in the cytoplasm. The catalysed reaction is [ThiS sulfur-carrier protein]-C-terminal-Gly-aminoethanethioate + 2-iminoacetate + 1-deoxy-D-xylulose 5-phosphate = [ThiS sulfur-carrier protein]-C-terminal Gly-Gly + 2-[(2R,5Z)-2-carboxy-4-methylthiazol-5(2H)-ylidene]ethyl phosphate + 2 H2O + H(+). It participates in cofactor biosynthesis; thiamine diphosphate biosynthesis. Its function is as follows. Catalyzes the rearrangement of 1-deoxy-D-xylulose 5-phosphate (DXP) to produce the thiazole phosphate moiety of thiamine. Sulfur is provided by the thiocarboxylate moiety of the carrier protein ThiS. In vitro, sulfur can be provided by H(2)S. The protein is Thiazole synthase of Brucella abortus (strain S19).